The primary structure comprises 153 residues: Superoxide dismutase [Cu-Zn] (153 aa).

Cu cation contacts are provided by H45, H47, and H62. C56 and C145 are disulfide-bonded. Residues H62, H70, H79, and D82 each coordinate Zn(2+). Residue H119 participates in Cu cation binding.

The protein belongs to the Cu-Zn superoxide dismutase family. As to quaternary structure, homodimer. It depends on Cu cation as a cofactor. Zn(2+) serves as cofactor.

The protein resides in the cytoplasm. It catalyses the reaction 2 superoxide + 2 H(+) = H2O2 + O2. Functionally, destroys radicals which are normally produced within the cells and which are toxic to biological systems. The polypeptide is Superoxide dismutase [Cu-Zn] (Ceratitis capitata (Mediterranean fruit fly)).